Here is a 432-residue protein sequence, read N- to C-terminus: tRNA(Ile)-lysidine synthase (432 aa).

An ATP-binding site is contributed by Ser-19–Ser-24.

The protein belongs to the tRNA(Ile)-lysidine synthase family.

Its subcellular location is the cytoplasm. The enzyme catalyses cytidine(34) in tRNA(Ile2) + L-lysine + ATP = lysidine(34) in tRNA(Ile2) + AMP + diphosphate + H(+). Functionally, ligates lysine onto the cytidine present at position 34 of the AUA codon-specific tRNA(Ile) that contains the anticodon CAU, in an ATP-dependent manner. Cytidine is converted to lysidine, thus changing the amino acid specificity of the tRNA from methionine to isoleucine. This Staphylococcus epidermidis (strain ATCC 35984 / DSM 28319 / BCRC 17069 / CCUG 31568 / BM 3577 / RP62A) protein is tRNA(Ile)-lysidine synthase.